We begin with the raw amino-acid sequence, 107 residues long: Nucleoid-associated protein A1C_06705 (107 aa).

It belongs to the YbaB/EbfC family. As to quaternary structure, homodimer.

It localises to the cytoplasm. The protein localises to the nucleoid. In terms of biological role, binds to DNA and alters its conformation. May be involved in regulation of gene expression, nucleoid organization and DNA protection. The polypeptide is Nucleoid-associated protein A1C_06705 (Rickettsia akari (strain Hartford)).